A 224-amino-acid polypeptide reads, in one-letter code: MSNENQTPRGTRRRKNLSEKQLAILDVIQRSVSQRGYPPSMREIGDAVGLSSLSSVTHQLNQLELSGYLRRDPNRPRALEILIDLPSAAAPDFESQTPVGDAAMVPLVGRIAAGVPITAEQQVEEVFPLPRQLVGNGELFMLKVVGESMIDAAICDGDWVVVRAQNTAENGDIVAAMLDEEATVKVFRQRDGHTWLLPRNSNFEPILGDFSQILGKVVAVLRAV.

The segment at residues 41–61 is a DNA-binding region (H-T-H motif); that stretch reads MREIGDAVGLSSLSSVTHQLN. Catalysis depends on for autocatalytic cleavage activity residues Ser-148 and Lys-185.

It belongs to the peptidase S24 family. In terms of assembly, homodimer.

It carries out the reaction Hydrolysis of Ala-|-Gly bond in repressor LexA.. Its function is as follows. Represses a number of genes involved in the response to DNA damage (SOS response), including recA and lexA. In the presence of single-stranded DNA, RecA interacts with LexA causing an autocatalytic cleavage which disrupts the DNA-binding part of LexA, leading to derepression of the SOS regulon and eventually DNA repair. The polypeptide is LexA repressor (Leifsonia xyli subsp. xyli (strain CTCB07)).